A 480-amino-acid chain; its full sequence is UDP-N-acetylmuramate--L-alanine ligase (480 aa).

129–135 (GSHGKTT) serves as a coordination point for ATP.

The protein belongs to the MurCDEF family.

It localises to the cytoplasm. The catalysed reaction is UDP-N-acetyl-alpha-D-muramate + L-alanine + ATP = UDP-N-acetyl-alpha-D-muramoyl-L-alanine + ADP + phosphate + H(+). Its pathway is cell wall biogenesis; peptidoglycan biosynthesis. In terms of biological role, cell wall formation. The chain is UDP-N-acetylmuramate--L-alanine ligase from Syntrophus aciditrophicus (strain SB).